A 305-amino-acid polypeptide reads, in one-letter code: Homoserine O-acetyltransferase (305 aa).

Residue Cys142 is the Acyl-thioester intermediate of the active site. Substrate-binding residues include Lys163 and Ser192. The active-site Proton acceptor is the His235. Glu237 is an active-site residue. Arg249 serves as a coordination point for substrate.

This sequence belongs to the MetA family.

It is found in the cytoplasm. The enzyme catalyses L-homoserine + acetyl-CoA = O-acetyl-L-homoserine + CoA. It participates in amino-acid biosynthesis; L-methionine biosynthesis via de novo pathway; O-acetyl-L-homoserine from L-homoserine: step 1/1. Transfers an acetyl group from acetyl-CoA to L-homoserine, forming acetyl-L-homoserine. The protein is Homoserine O-acetyltransferase of Roseobacter denitrificans (strain ATCC 33942 / OCh 114) (Erythrobacter sp. (strain OCh 114)).